The primary structure comprises 123 residues: Small ribosomal subunit protein uS12 (123 aa).

Asp-89 carries the post-translational modification 3-methylthioaspartic acid.

It belongs to the universal ribosomal protein uS12 family. Part of the 30S ribosomal subunit. Contacts proteins S8 and S17. May interact with IF1 in the 30S initiation complex.

Its function is as follows. With S4 and S5 plays an important role in translational accuracy. Interacts with and stabilizes bases of the 16S rRNA that are involved in tRNA selection in the A site and with the mRNA backbone. Located at the interface of the 30S and 50S subunits, it traverses the body of the 30S subunit contacting proteins on the other side and probably holding the rRNA structure together. The combined cluster of proteins S8, S12 and S17 appears to hold together the shoulder and platform of the 30S subunit. The protein is Small ribosomal subunit protein uS12 of Acidiphilium cryptum (strain JF-5).